A 428-amino-acid polypeptide reads, in one-letter code: Gamma-glutamyl phosphate reductase (428 aa).

Belongs to the gamma-glutamyl phosphate reductase family.

It localises to the cytoplasm. It catalyses the reaction L-glutamate 5-semialdehyde + phosphate + NADP(+) = L-glutamyl 5-phosphate + NADPH + H(+). It functions in the pathway amino-acid biosynthesis; L-proline biosynthesis; L-glutamate 5-semialdehyde from L-glutamate: step 2/2. Its function is as follows. Catalyzes the NADPH-dependent reduction of L-glutamate 5-phosphate into L-glutamate 5-semialdehyde and phosphate. The product spontaneously undergoes cyclization to form 1-pyrroline-5-carboxylate. The chain is Gamma-glutamyl phosphate reductase from Zymomonas mobilis subsp. mobilis (strain ATCC 31821 / ZM4 / CP4).